The primary structure comprises 300 residues: MAAANSWWEIRILCHPSLEETAFWRLEKFGCLGTSTEKKAHSLLVRGYLPQEKAEILDLAALALWCEQDALLFQVPKPRFHWQLIDEEDWSISWKEHWQPTPVGDRFIIYPAWIDPPENSDRLILRLDPGVAFGTGTHATTQLCLESLEMRVEPDKHQVLADLGCGSGILGIGAVLLGAAKVYGVDNDPLTVESARHNRHLNQIHPDNLVINEGSVPELEQLIAEPVDGIICNILAEVIVDLLPQFTPLVKPHGWAILSGIMVEQSQAIADALEQNGWTVVAIWKRQEWCCFQARREEGD.

S-adenosyl-L-methionine contacts are provided by threonine 141, glycine 164, aspartate 186, and asparagine 233.

This sequence belongs to the methyltransferase superfamily. PrmA family.

It is found in the cytoplasm. It carries out the reaction L-lysyl-[protein] + 3 S-adenosyl-L-methionine = N(6),N(6),N(6)-trimethyl-L-lysyl-[protein] + 3 S-adenosyl-L-homocysteine + 3 H(+). Functionally, methylates ribosomal protein L11. The sequence is that of Ribosomal protein L11 methyltransferase from Synechocystis sp. (strain ATCC 27184 / PCC 6803 / Kazusa).